The primary structure comprises 450 residues: tRNA modification GTPase MnmE (450 aa).

(6S)-5-formyl-5,6,7,8-tetrahydrofolate is bound by residues Arg25, Glu83, and Lys122. A TrmE-type G domain is found at 218 to 377 (GFKVAIIGKP…QMEALLDSIG (160 aa)). Asn228 is a K(+) binding site. Residues 228–233 (NVGKSS), 247–253 (SDIAGTT), and 272–275 (DTAG) each bind GTP. Ser232 is a binding site for Mg(2+). Positions 247, 249, and 252 each coordinate K(+). Thr253 lines the Mg(2+) pocket. Lys450 contributes to the (6S)-5-formyl-5,6,7,8-tetrahydrofolate binding site.

This sequence belongs to the TRAFAC class TrmE-Era-EngA-EngB-Septin-like GTPase superfamily. TrmE GTPase family. Homodimer. Heterotetramer of two MnmE and two MnmG subunits. The cofactor is K(+).

It is found in the cytoplasm. Its function is as follows. Exhibits a very high intrinsic GTPase hydrolysis rate. Involved in the addition of a carboxymethylaminomethyl (cmnm) group at the wobble position (U34) of certain tRNAs, forming tRNA-cmnm(5)s(2)U34. In Sulfurovum sp. (strain NBC37-1), this protein is tRNA modification GTPase MnmE.